The following is a 158-amino-acid chain: 6,7-dimethyl-8-ribityllumazine synthase (158 aa).

Residues Phe24, 58-60 (AFE), and 82-84 (AVI) contribute to the 5-amino-6-(D-ribitylamino)uracil site. Residue 87–88 (GT) participates in (2S)-2-hydroxy-3-oxobutyl phosphate binding. Catalysis depends on His90, which acts as the Proton donor. Phe115 contacts 5-amino-6-(D-ribitylamino)uracil. Arg129 contributes to the (2S)-2-hydroxy-3-oxobutyl phosphate binding site.

The protein belongs to the DMRL synthase family. As to quaternary structure, forms an icosahedral capsid composed of 60 subunits, arranged as a dodecamer of pentamers.

It catalyses the reaction (2S)-2-hydroxy-3-oxobutyl phosphate + 5-amino-6-(D-ribitylamino)uracil = 6,7-dimethyl-8-(1-D-ribityl)lumazine + phosphate + 2 H2O + H(+). It participates in cofactor biosynthesis; riboflavin biosynthesis; riboflavin from 2-hydroxy-3-oxobutyl phosphate and 5-amino-6-(D-ribitylamino)uracil: step 1/2. In terms of biological role, catalyzes the formation of 6,7-dimethyl-8-ribityllumazine by condensation of 5-amino-6-(D-ribitylamino)uracil with 3,4-dihydroxy-2-butanone 4-phosphate. This is the penultimate step in the biosynthesis of riboflavin. This is 6,7-dimethyl-8-ribityllumazine synthase from Ectopseudomonas mendocina (strain ymp) (Pseudomonas mendocina).